We begin with the raw amino-acid sequence, 332 residues long: Succinylglutamate desuccinylase (332 aa).

Residues histidine 59, glutamate 62, and histidine 151 each contribute to the Zn(2+) site. Glutamate 215 is an active-site residue.

The protein belongs to the AspA/AstE family. Succinylglutamate desuccinylase subfamily. It depends on Zn(2+) as a cofactor.

The enzyme catalyses N-succinyl-L-glutamate + H2O = L-glutamate + succinate. It participates in amino-acid degradation; L-arginine degradation via AST pathway; L-glutamate and succinate from L-arginine: step 5/5. Its function is as follows. Transforms N(2)-succinylglutamate into succinate and glutamate. The polypeptide is Succinylglutamate desuccinylase (Pseudomonas aeruginosa (strain UCBPP-PA14)).